The following is a 104-amino-acid chain: Phosphoribosyl-ATP pyrophosphatase (104 aa).

This sequence belongs to the PRA-PH family.

It is found in the cytoplasm. The catalysed reaction is 1-(5-phospho-beta-D-ribosyl)-ATP + H2O = 1-(5-phospho-beta-D-ribosyl)-5'-AMP + diphosphate + H(+). It participates in amino-acid biosynthesis; L-histidine biosynthesis; L-histidine from 5-phospho-alpha-D-ribose 1-diphosphate: step 2/9. The protein is Phosphoribosyl-ATP pyrophosphatase of Streptococcus sanguinis (strain SK36).